Reading from the N-terminus, the 472-residue chain is Eukaryotic translation initiation factor 2 subunit 3 (472 aa).

N-acetylalanine is present on alanine 2. A Phosphoserine modification is found at serine 16. Positions glutamine 39–arginine 248 constitute a tr-type G domain. Residues glycine 48–serine 55 form a G1 region. Alanine 51–threonine 56 contacts GTP. The G2 stretch occupies residues asparagine 76 to lysine 80. Residues aspartate 134–glycine 137 are G3. Residues asparagine 190–aspartate 193 and serine 225–glutamine 227 contribute to the GTP site. Residues asparagine 190 to aspartate 193 are G4. Residues serine 225–glutamine 227 are G5. An interacts with CDC123 region spans residues glycine 457 to valine 469.

This sequence belongs to the TRAFAC class translation factor GTPase superfamily. Classic translation factor GTPase family. EIF2G subfamily. As to quaternary structure, eukaryotic translation initiation factor 2 eIF2 is a heterotrimeric complex composed of an alpha (EIF2S1), a beta (EIF2S2) and a gamma (EIF2S3) chain. eIF2 is member of the 43S pre-initiation complex (43S PIC). Interacts (via C-terminus) with CDC123; the interaction is direct.

Its subcellular location is the cytoplasm. It localises to the cytosol. The enzyme catalyses GTP + H2O = GDP + phosphate + H(+). Member of the eIF2 complex that functions in the early steps of protein synthesis by forming a ternary complex with GTP and initiator tRNA. This complex binds to a 40S ribosomal subunit, followed by mRNA binding to form the 43S pre-initiation complex (43S PIC). Junction of the 60S ribosomal subunit to form the 80S initiation complex is preceded by hydrolysis of the GTP bound to eIF2 and release of an eIF2-GDP binary complex. In order for eIF2 to recycle and catalyze another round of initiation, the GDP bound to eIF2 must exchange with GTP by way of a reaction catalyzed by eIF-2B. This Bos taurus (Bovine) protein is Eukaryotic translation initiation factor 2 subunit 3 (EIF2S3).